Here is a 425-residue protein sequence, read N- to C-terminus: Glucose-6-phosphate 1-dehydrogenase (425 aa).

2 residues coordinate NADP(+): R44 and K135. The substrate site is built by H165, K169, E201, and D220. Residue H225 is the Proton acceptor of the active site. K311 serves as a coordination point for substrate.

The protein belongs to the glucose-6-phosphate dehydrogenase family.

The catalysed reaction is D-glucose 6-phosphate + NADP(+) = 6-phospho-D-glucono-1,5-lactone + NADPH + H(+). It functions in the pathway carbohydrate degradation; pentose phosphate pathway; D-ribulose 5-phosphate from D-glucose 6-phosphate (oxidative stage): step 1/3. Catalyzes the oxidation of glucose 6-phosphate to 6-phosphogluconolactone. The protein is Glucose-6-phosphate 1-dehydrogenase of Helicobacter pylori (strain ATCC 700392 / 26695) (Campylobacter pylori).